Consider the following 239-residue polypeptide: Small ribosomal subunit protein uS3 (239 aa).

In terms of domain architecture, KH type-2 spans 39 to 107 (IRAALMKTLK…EVLINIVEVR (69 aa)). Positions 214 to 239 (AQDKKMAEQDHGGGGGDRRRRDRDAA) are disordered.

Belongs to the universal ribosomal protein uS3 family. As to quaternary structure, part of the 30S ribosomal subunit. Forms a tight complex with proteins S10 and S14.

Functionally, binds the lower part of the 30S subunit head. Binds mRNA in the 70S ribosome, positioning it for translation. The sequence is that of Small ribosomal subunit protein uS3 from Methylocella silvestris (strain DSM 15510 / CIP 108128 / LMG 27833 / NCIMB 13906 / BL2).